The primary structure comprises 145 residues: Peptide methionine sulfoxide reductase MsrB (145 aa).

Positions 6–129 (KNERLKQLTD…NSAALRFIPV (124 aa)) constitute a MsrB domain. Cys-118 functions as the Nucleophile in the catalytic mechanism.

This sequence belongs to the MsrB Met sulfoxide reductase family.

It carries out the reaction L-methionyl-[protein] + [thioredoxin]-disulfide + H2O = L-methionyl-(R)-S-oxide-[protein] + [thioredoxin]-dithiol. The sequence is that of Peptide methionine sulfoxide reductase MsrB from Listeria innocua serovar 6a (strain ATCC BAA-680 / CLIP 11262).